A 361-amino-acid chain; its full sequence is MTTTPQPPPQPDETPEGAAGAATAGRDPLEIAADLVDDVSRELDPAELASLERLDQPRRILFVHAHPDDESIGTGATMARYAEAGAGVVLLTATRGELGEVIPPELAHLDPDALAEHRTGELATAMEALGVSDHRFLTRPDGTGYRDSGMVWLEPGRAAAGDDVDPRSLAAADPEEVAARIAEVVREVRPQVVVTYEPGGGYGHPDHVRVHEATVRALVLAAGDGSRGAGGAVPWQVAKVYEIVQPERPVREALRRLAETGAEGAGDPEGPLPSVVVPDGEVTTVVDGTGQVPAKIAALRAHATQVTLDLDAAVPAMRLSNGVPQPVWPQEHYRLVHGVAGGPYDAEGRETDLFAGIAPSS.

Residues 1–12 (MTTTPQPPPQPD) are compositionally biased toward pro residues. Positions 1–27 (MTTTPQPPPQPDETPEGAAGAATAGRD) are disordered. Residues 16-25 (EGAAGAATAG) show a composition bias toward low complexity. Zn(2+)-binding residues include histidine 66, aspartate 69, and histidine 207.

Belongs to the MshB deacetylase family. It depends on Zn(2+) as a cofactor.

It carries out the reaction 1D-myo-inositol 2-acetamido-2-deoxy-alpha-D-glucopyranoside + H2O = 1D-myo-inositol 2-amino-2-deoxy-alpha-D-glucopyranoside + acetate. Functionally, catalyzes the deacetylation of 1D-myo-inositol 2-acetamido-2-deoxy-alpha-D-glucopyranoside (GlcNAc-Ins) in the mycothiol biosynthesis pathway. This chain is 1D-myo-inositol 2-acetamido-2-deoxy-alpha-D-glucopyranoside deacetylase, found in Kineococcus radiotolerans (strain ATCC BAA-149 / DSM 14245 / SRS30216).